A 121-amino-acid chain; its full sequence is Large ribosomal subunit protein uL18 (121 aa).

This sequence belongs to the universal ribosomal protein uL18 family. As to quaternary structure, part of the 50S ribosomal subunit; part of the 5S rRNA/L5/L18/L25 subcomplex. Contacts the 5S and 23S rRNAs.

Functionally, this is one of the proteins that bind and probably mediate the attachment of the 5S RNA into the large ribosomal subunit, where it forms part of the central protuberance. The chain is Large ribosomal subunit protein uL18 from Roseiflexus castenholzii (strain DSM 13941 / HLO8).